The primary structure comprises 273 residues: MNRQSVLRLARQTGAFPLAELPPPYLAPSLHFSMNRSTVQCSNFSSTAAVAAGRGDLNKVRGVSAIHRTGPKYKLGVSKYPLPKPVSPDALPKRNATPDHGLWGFFPTDRTALSTPTYDIECGRSWSIQELREKSWDDLHSLWWVCVKERNRIATSDMERKRLKAGYGEWESSERDRVIRVTQNGIKHVLRERWYAWEEAQRLYRKGYRPQEDSQEAIWEMRADSVSNSQGAGQLLVVSKAEDMIDPLRHDRWEKGQEENSGGETEDGNAPSN.

Positions 247–258 are enriched in basic and acidic residues; the sequence is PLRHDRWEKGQE. The segment at 247 to 273 is disordered; the sequence is PLRHDRWEKGQEENSGGETEDGNAPSN.

It belongs to the universal ribosomal protein uL29 family. In terms of assembly, component of the mitochondrial large ribosomal subunit. Mature mitochondrial ribosomes consist of a small (37S) and a large (54S) subunit. The 37S subunit contains at least 33 different proteins and 1 molecule of RNA (15S). The 54S subunit contains at least 45 different proteins and 1 molecule of RNA (21S).

It is found in the mitochondrion. In Aspergillus niger (strain ATCC MYA-4892 / CBS 513.88 / FGSC A1513), this protein is Large ribosomal subunit protein uL29m (mrpl4).